A 414-amino-acid chain; its full sequence is S-adenosylmethionine synthase (414 aa).

An ATP-binding site is contributed by histidine 11. Mg(2+) is bound at residue aspartate 13. Glutamate 39 provides a ligand contact to K(+). L-methionine-binding residues include glutamate 52 and glutamine 95. Residues 95-105 are flexible loop; that stretch reads QSPDIAQGVNM. Residues 169–171, 245–246, aspartate 254, 260–261, alanine 277, and lysine 281 contribute to the ATP site; these read DGK, KF, and RK. Position 254 (aspartate 254) interacts with L-methionine. Lysine 285 is a binding site for L-methionine.

This sequence belongs to the AdoMet synthase family. In terms of assembly, homotetramer; dimer of dimers. Requires Mg(2+) as cofactor. K(+) serves as cofactor.

The protein resides in the cytoplasm. It carries out the reaction L-methionine + ATP + H2O = S-adenosyl-L-methionine + phosphate + diphosphate. The protein operates within amino-acid biosynthesis; S-adenosyl-L-methionine biosynthesis; S-adenosyl-L-methionine from L-methionine: step 1/1. In terms of biological role, catalyzes the formation of S-adenosylmethionine (AdoMet) from methionine and ATP. The overall synthetic reaction is composed of two sequential steps, AdoMet formation and the subsequent tripolyphosphate hydrolysis which occurs prior to release of AdoMet from the enzyme. This Synechococcus sp. (strain JA-2-3B'a(2-13)) (Cyanobacteria bacterium Yellowstone B-Prime) protein is S-adenosylmethionine synthase.